The chain runs to 201 residues: Ribonuclease HII (201 aa).

The RNase H type-2 domain occupies 12-201 (DLVAGVDEVG…VRELLDVPVQ (190 aa)). Positions 18, 19, and 110 each coordinate a divalent metal cation.

The protein belongs to the RNase HII family. Requires Mn(2+) as cofactor. It depends on Mg(2+) as a cofactor.

Its subcellular location is the cytoplasm. It carries out the reaction Endonucleolytic cleavage to 5'-phosphomonoester.. Endonuclease that specifically degrades the RNA of RNA-DNA hybrids. The chain is Ribonuclease HII from Pseudomonas aeruginosa (strain UCBPP-PA14).